Consider the following 336-residue polypeptide: DNA-directed RNA polymerase subunit alpha (336 aa).

The alpha N-terminal domain (alpha-NTD) stretch occupies residues 1–235; that stretch reads MIEFVIPKKL…HFKIVTEGLP (235 aa). Positions 264–336 are alpha C-terminal domain (alpha-CTD); that stretch reads RENSDVYNRK…KFGLELRKGE (73 aa).

This sequence belongs to the RNA polymerase alpha chain family. Homodimer. The RNAP catalytic core consists of 2 alpha, 1 beta, 1 beta' and 1 omega subunit. When a sigma factor is associated with the core the holoenzyme is formed, which can initiate transcription.

The catalysed reaction is RNA(n) + a ribonucleoside 5'-triphosphate = RNA(n+1) + diphosphate. Functionally, DNA-dependent RNA polymerase catalyzes the transcription of DNA into RNA using the four ribonucleoside triphosphates as substrates. The polypeptide is DNA-directed RNA polymerase subunit alpha (Thermotoga maritima (strain ATCC 43589 / DSM 3109 / JCM 10099 / NBRC 100826 / MSB8)).